The chain runs to 387 residues: Ferrochelatase (387 aa).

Fe cation-binding residues include histidine 196 and glutamate 277.

Belongs to the ferrochelatase family.

It localises to the cytoplasm. It carries out the reaction heme b + 2 H(+) = protoporphyrin IX + Fe(2+). The protein operates within porphyrin-containing compound metabolism; protoheme biosynthesis; protoheme from protoporphyrin-IX: step 1/1. Catalyzes the ferrous insertion into protoporphyrin IX. The sequence is that of Ferrochelatase from Synechococcus elongatus (strain ATCC 33912 / PCC 7942 / FACHB-805) (Anacystis nidulans R2).